The following is a 559-amino-acid chain: Potassium-transporting ATPase potassium-binding subunit (559 aa).

13 consecutive transmembrane segments (helical) span residues 5 to 25 (GFLL…PLGS), 27 to 47 (LARL…RILW), 63 to 83 (LLAL…LLFW), 132 to 152 (GLTV…FALI), 170 to 190 (LVRI…LFFI), 253 to 273 (LAQM…FGEA), 283 to 303 (LLWA…WAEV), 327 to 347 (FGVL…CGAV), 356 to 376 (ALGG…FGGV), 379 to 399 (GLYG…LMIG), 416 to 436 (MTAL…ALAM), 484 to 504 (LLAF…MAIA), and 524 to 544 (GALF…LTFI).

The protein belongs to the KdpA family. As to quaternary structure, the system is composed of three essential subunits: KdpA, KdpB and KdpC.

Its subcellular location is the cell inner membrane. Functionally, part of the high-affinity ATP-driven potassium transport (or Kdp) system, which catalyzes the hydrolysis of ATP coupled with the electrogenic transport of potassium into the cytoplasm. This subunit binds the periplasmic potassium ions and delivers the ions to the membrane domain of KdpB through an intramembrane tunnel. This Salmonella newport (strain SL254) protein is Potassium-transporting ATPase potassium-binding subunit.